The chain runs to 315 residues: Porphobilinogen deaminase (315 aa).

Cys251 carries the post-translational modification S-(dipyrrolylmethanemethyl)cysteine.

The protein belongs to the HMBS family. Monomer. It depends on dipyrromethane as a cofactor.

It catalyses the reaction 4 porphobilinogen + H2O = hydroxymethylbilane + 4 NH4(+). It participates in porphyrin-containing compound metabolism; protoporphyrin-IX biosynthesis; coproporphyrinogen-III from 5-aminolevulinate: step 2/4. Functionally, tetrapolymerization of the monopyrrole PBG into the hydroxymethylbilane pre-uroporphyrinogen in several discrete steps. The sequence is that of Porphobilinogen deaminase from Sphingopyxis alaskensis (strain DSM 13593 / LMG 18877 / RB2256) (Sphingomonas alaskensis).